A 251-amino-acid polypeptide reads, in one-letter code: HTH-type transcriptional regulator UlaR (251 aa).

Residues 3–58 enclose the HTH deoR-type domain; sequence EAQRHQILLEMLAQLGFVTVEKVVERLGISPATARRDINKLDESGKLKKVRNGAEA. The segment at residues 20–39 is a DNA-binding region (H-T-H motif); it reads VTVEKVVERLGISPATARRD.

It localises to the cytoplasm. In terms of biological role, represses ulaG and the ulaABCDEF operon. The sequence is that of HTH-type transcriptional regulator UlaR from Escherichia coli O127:H6 (strain E2348/69 / EPEC).